The chain runs to 246 residues: 5-oxoprolinase subunit A (246 aa).

It belongs to the LamB/PxpA family. In terms of assembly, forms a complex composed of PxpA, PxpB and PxpC.

It carries out the reaction 5-oxo-L-proline + ATP + 2 H2O = L-glutamate + ADP + phosphate + H(+). In terms of biological role, catalyzes the cleavage of 5-oxoproline to form L-glutamate coupled to the hydrolysis of ATP to ADP and inorganic phosphate. In Cupriavidus necator (strain ATCC 17699 / DSM 428 / KCTC 22496 / NCIMB 10442 / H16 / Stanier 337) (Ralstonia eutropha), this protein is 5-oxoprolinase subunit A.